The primary structure comprises 139 residues: UPF0102 protein Caul_0175 (139 aa).

Belongs to the UPF0102 family.

The protein is UPF0102 protein Caul_0175 of Caulobacter sp. (strain K31).